A 355-amino-acid polypeptide reads, in one-letter code: 3-dehydroquinate synthase (355 aa).

NAD(+) is bound by residues 71-76, 105-109, 129-130, lysine 142, and lysine 151; these read EGEASK, GVVGD, and TS. Glutamate 184, histidine 246, and histidine 263 together coordinate Zn(2+).

This sequence belongs to the sugar phosphate cyclases superfamily. Dehydroquinate synthase family. Requires Co(2+) as cofactor. Zn(2+) serves as cofactor. NAD(+) is required as a cofactor.

It is found in the cytoplasm. The catalysed reaction is 7-phospho-2-dehydro-3-deoxy-D-arabino-heptonate = 3-dehydroquinate + phosphate. It functions in the pathway metabolic intermediate biosynthesis; chorismate biosynthesis; chorismate from D-erythrose 4-phosphate and phosphoenolpyruvate: step 2/7. Catalyzes the conversion of 3-deoxy-D-arabino-heptulosonate 7-phosphate (DAHP) to dehydroquinate (DHQ). This chain is 3-dehydroquinate synthase, found in Streptococcus sanguinis (strain SK36).